Here is a 703-residue protein sequence, read N- to C-terminus: DnaJ homolog subfamily C member 14 (703 aa).

Positions 1–11 are enriched in basic and acidic residues; sequence MAQKHPGERRL. Positions 1 to 229 are disordered; sequence MAQKHPGERR…GRHRLARKRS (229 aa). The segment covering 17–28 has biased composition (low complexity); the sequence is SGGTSLSTSGSS. Pro residues predominate over residues 75–84; sequence HGPPRGPGPP. Positions 91–102 are enriched in acidic residues; sequence DESETGSEESGV. The segment covering 121–133 has biased composition (polar residues); sequence SFLSIPSACNCQG. Over residues 163-176 the composition is skewed to acidic residues; it reads GEDEELEEEYDDEE. Residues 193-202 are compositionally biased toward basic residues; sequence PLSRRQKHRF. Over residues 203 to 218 the composition is skewed to basic and acidic residues; sequence LIKEDVRDSGRREPKA. The span at 219–228 shows a compositional bias: basic residues; that stretch reads PGRHRLARKR. The next 2 helical transmembrane spans lie at 305-325 and 327-347; these read MMFQ…IRIL and VVGA…QLGW. The 65-residue stretch at 444 to 508 folds into the J domain; sequence NPFHVLGVEA…ERRKEYEMKR (65 aa). Disordered regions lie at residues 622 to 643 and 659 to 703; these read FGSR…PPAD and MSNG…PFQR. Polar residues predominate over residues 673–684; it reads GTTSTSRPNSSV. Over residues 691–703 the composition is skewed to basic residues; it reads PKRRKKVRRPFQR.

In terms of assembly, interacts with the FxxxFxxxF motif of DRD1 via its C-terminal domain.

It localises to the endoplasmic reticulum membrane. Regulates the export of target proteins, such as DRD1, from the endoplasmic reticulum to the cell surface. The sequence is that of DnaJ homolog subfamily C member 14 (Dnajc14) from Mus musculus (Mouse).